The following is a 607-amino-acid chain: MIQNVGNHLRRGLASVFSNRTSRKSALRAGNDSAMADGEGYRNPTEVQMSQLVLPCHTNQRGELSVGQLLKWIDTTACLSAERHAGCPCVTASMDDIYFEHTISVGQVVNIKAKVNRAFNSSMEVGIQVASEDLCSEKQWNVCKALATFVARREITKVKLKQITPRTEEEKMEHSVAAERRRMRLVYADTIKDLLANCAIQGDLESRDCSRMVPAEKTRVESVELVLPPHANHQGNTFGGQIMAWMENVATIAASRLCRAHPTLKAIEMFHFRGPSQVGDRLVLKAIVNNAFKHSMEVGVCVEAYRQEAETHRRHINSAFMTFVVLDADDQPQLLPWIRPQPGDGERRYREASARKKIRLDRKYIVSCKQTEVPLSVPWDPSNQVYLSYNNVSSLKMLVAKDNWVLSSEISQVRLYTLEDDKFLSFHMEMVVHVDAAQAFLLLSDLRQRPEWDKHYRSVELVQQVDEDDAIYHVTSPALGGHTKPQDFVILASRRKPCDNGDPYVIALRSVTLPTHRETPEYRRGETLCSGFCLWREGDQLTKCCWVRVSLTELVSASGFYSWGLESRSKGRRSDGWNGKLAGGHLSTLKAIPVAKINSRFGYLQDT.

The N-terminal 13 residues, 1 to 13 (MIQNVGNHLRRGL), are a transit peptide targeting the mitochondrion. 2 positions are modified to phosphoserine: serine 15 and serine 25. One can recognise a HotDog ACOT-type 1 domain in the interval 43-155 (NPTEVQMSQL…LATFVARREI (113 aa)). CoA-binding positions include 91–93 (TAS), 120–122 (NSS), arginine 181, and 271–273 (HFR). Residues 216–329 (EKTRVESVEL…FMTFVVLDAD (114 aa)) form the HotDog ACOT-type 2 domain. Residues 375–585 (LSVPWDPSNQ…GWNGKLAGGH (211 aa)) enclose the START domain.

Isoform 1 is predominantly expressed in skeletal muscle, liver, testis, stomach, spleen, lung and brain. Isoform 2 is predominantly expressed in kidney, uterus, hibernoma and white adipose tissue.

The protein localises to the mitochondrion matrix. The protein resides in the cytoplasm. It carries out the reaction hexadecanoyl-CoA + H2O = hexadecanoate + CoA + H(+). The catalysed reaction is tetradecanoyl-CoA + H2O = tetradecanoate + CoA + H(+). The enzyme catalyses dodecanoyl-CoA + H2O = dodecanoate + CoA + H(+). It catalyses the reaction butanoyl-CoA + H2O = butanoate + CoA + H(+). Its pathway is lipid metabolism; fatty acid metabolism. Its function is as follows. Has an acyl-CoA thioesterase activity with a preference for the long chain fatty acyl-CoA thioesters hexadecanoyl-CoA/palmitoyl-CoA and tetradecanoyl-CoA/myristoyl-CoA which are the main substrates in the mitochondrial beta-oxidation pathway. The protein is Acyl-coenzyme A thioesterase 11 (ACOT11) of Homo sapiens (Human).